A 250-amino-acid polypeptide reads, in one-letter code: HTH-type transcriptional regulator SarS (250 aa).

2 DNA-binding regions (H-T-H motif) span residues 53–76 (FKKI…VLVK) and 177–200 (LKDL…NLKK).

It belongs to the SarA family.

It is found in the cytoplasm. Its function is as follows. Transcriptional regulator that controls expression of some virulence factors in a cell density-dependent manner. This is HTH-type transcriptional regulator SarS (sarS) from Staphylococcus aureus (strain Mu3 / ATCC 700698).